A 342-amino-acid polypeptide reads, in one-letter code: Arrestin domain-containing protein 5 (342 aa).

It belongs to the arrestin family. Testis-enriched.

Its subcellular location is the membrane. Plays an essential role in spermatogenesis. May be involved in the anchoring of the sperm head to the tail during spermatogenesis by affecting SEC22A-mediated SUN5 and NDC1 transport and localization. The sequence is that of Arrestin domain-containing protein 5 (ARRDC5) from Homo sapiens (Human).